A 100-amino-acid chain; its full sequence is Small ribosomal subunit protein uS14c (100 aa).

It belongs to the universal ribosomal protein uS14 family. Part of the 30S ribosomal subunit.

The protein resides in the plastid. It localises to the chloroplast. Its function is as follows. Binds 16S rRNA, required for the assembly of 30S particles. The protein is Small ribosomal subunit protein uS14c of Carica papaya (Papaya).